The chain runs to 554 residues: Potassium-transporting ATPase potassium-binding subunit (554 aa).

The next 10 membrane-spanning stretches (helical) occupy residues 1-21 (MSPV…LALA), 60-80 (PAYL…LYVL), 131-151 (GLAV…VALV), 174-194 (VRVL…CGAI), 246-266 (PGPF…FALT), 279-299 (GYAI…LMMW), 375-395 (GLYG…LMVG), 412-432 (FAAC…AAAM), 481-501 (IGIV…ALAG), and 525-545 (GLLV…ALAL).

Belongs to the KdpA family. As to quaternary structure, the system is composed of three essential subunits: KdpA, KdpB and KdpC.

The protein resides in the cell membrane. Functionally, part of the high-affinity ATP-driven potassium transport (or Kdp) system, which catalyzes the hydrolysis of ATP coupled with the electrogenic transport of potassium into the cytoplasm. This subunit binds the extracellular potassium ions and delivers the ions to the membrane domain of KdpB through an intramembrane tunnel. The chain is Potassium-transporting ATPase potassium-binding subunit from Streptomyces avermitilis (strain ATCC 31267 / DSM 46492 / JCM 5070 / NBRC 14893 / NCIMB 12804 / NRRL 8165 / MA-4680).